A 1112-amino-acid chain; its full sequence is DNA polymerase II large subunit (1112 aa).

It belongs to the archaeal DNA polymerase II family. As to quaternary structure, heterodimer of a large subunit and a small subunit.

The catalysed reaction is DNA(n) + a 2'-deoxyribonucleoside 5'-triphosphate = DNA(n+1) + diphosphate. It catalyses the reaction Exonucleolytic cleavage in the 3'- to 5'-direction to yield nucleoside 5'-phosphates.. Functionally, possesses two activities: a DNA synthesis (polymerase) and an exonucleolytic activity that degrades single-stranded DNA in the 3'- to 5'-direction. Has a template-primer preference which is characteristic of a replicative DNA polymerase. In Cenarchaeum symbiosum (strain A), this protein is DNA polymerase II large subunit.